Consider the following 502-residue polypeptide: Probable glycine dehydrogenase (decarboxylating) subunit 2 (502 aa).

Residue Lys-273 is modified to N6-(pyridoxal phosphate)lysine.

Belongs to the GcvP family. C-terminal subunit subfamily. As to quaternary structure, the glycine cleavage system is composed of four proteins: P, T, L and H. In this organism, the P 'protein' is a heterodimer of two subunits. It depends on pyridoxal 5'-phosphate as a cofactor.

The catalysed reaction is N(6)-[(R)-lipoyl]-L-lysyl-[glycine-cleavage complex H protein] + glycine + H(+) = N(6)-[(R)-S(8)-aminomethyldihydrolipoyl]-L-lysyl-[glycine-cleavage complex H protein] + CO2. In terms of biological role, the glycine cleavage system catalyzes the degradation of glycine. The P protein binds the alpha-amino group of glycine through its pyridoxal phosphate cofactor; CO(2) is released and the remaining methylamine moiety is then transferred to the lipoamide cofactor of the H protein. This chain is Probable glycine dehydrogenase (decarboxylating) subunit 2, found in Thermococcus gammatolerans (strain DSM 15229 / JCM 11827 / EJ3).